Reading from the N-terminus, the 165-residue chain is ER membrane protein complex subunit 5 (165 aa).

Residues 1–3 (MAP) are Cytoplasmic-facing. The helical transmembrane segment at 4 to 22 (SLWKGLVGIGLFALAHAAF) threads the bilayer. Topologically, residues 23 to 77 (SAAQHYFPSSGIKWKRKCEFLQSSSFQDKIFRSMYYVYDRSYMRLTEKEDESLPI) are lumenal. A helical membrane pass occupies residues 78-97 (DIVLQTLLAFAVTCYGIVHI). The Cytoplasmic segment spans residues 98–165 (AGEFKDMDAT…KLRKLESLRR (68 aa)). Phosphoserine is present on S154.

Belongs to the membrane magnesium transporter (TC 1.A.67) family. In terms of assembly, component of the ER membrane protein complex (EMC).

It is found in the endoplasmic reticulum membrane. The protein localises to the golgi apparatus membrane. It localises to the early endosome membrane. Functionally, part of the endoplasmic reticulum membrane protein complex (EMC) that enables the energy-independent insertion into endoplasmic reticulum membranes of newly synthesized membrane proteins. Preferentially accommodates proteins with transmembrane domains that are weakly hydrophobic or contain destabilizing features such as charged and aromatic residues. Involved in the cotranslational insertion of multi-pass membrane proteins in which stop-transfer membrane-anchor sequences become ER membrane spanning helices. It is also required for the post-translational insertion of tail-anchored/TA proteins in endoplasmic reticulum membranes. By mediating the proper cotranslational insertion of N-terminal transmembrane domains in an N-exo topology, with translocated N-terminus in the lumen of the ER, controls the topology of multi-pass membrane proteins like the G protein-coupled receptors. By regulating the insertion of various proteins in membranes, it is indirectly involved in many cellular processes. May be involved in Mg(2+) transport. This chain is ER membrane protein complex subunit 5, found in Bos taurus (Bovine).